We begin with the raw amino-acid sequence, 264 residues long: ATP synthase subunit a (264 aa).

A run of 5 helical transmembrane segments spans residues 39-59, 97-117, 139-159, 205-225, and 239-259; these read LDTLIISVVLGALFILIFYII, VAPLALTIFIWVFLMNFMDLV, TADPTLTFAMSITVFVLVVFY, LFGNLFAGELIFILIALLPWW, and LLVITVQAFIFMMLTVVYISL.

It belongs to the ATPase A chain family. As to quaternary structure, F-type ATPases have 2 components, CF(1) - the catalytic core - and CF(0) - the membrane proton channel. CF(1) has five subunits: alpha(3), beta(3), gamma(1), delta(1), epsilon(1). CF(0) has three main subunits: a(1), b(2) and c(9-12). The alpha and beta chains form an alternating ring which encloses part of the gamma chain. CF(1) is attached to CF(0) by a central stalk formed by the gamma and epsilon chains, while a peripheral stalk is formed by the delta and b chains.

It localises to the cell inner membrane. Key component of the proton channel; it plays a direct role in the translocation of protons across the membrane. The chain is ATP synthase subunit a from Coxiella burnetii (strain CbuG_Q212) (Coxiella burnetii (strain Q212)).